The chain runs to 339 residues: F-box protein At3g22700 (339 aa).

The region spanning 1-49 (MMSNLPLDLVEEILSRVPATSLKRLRSTCRQWNALLKDRRFTEKHFRKA) is the F-box domain.

The polypeptide is F-box protein At3g22700 (Arabidopsis thaliana (Mouse-ear cress)).